The primary structure comprises 453 residues: Methylenetetrahydrofolate--tRNA-(uracil-5-)-methyltransferase TrmFO (453 aa).

10–15 provides a ligand contact to FAD; the sequence is GGGLAG. The segment at 433–453 is disordered; the sequence is ELAPWIDSAPPTAVPAAPAAG. Positions 441-453 are enriched in low complexity; the sequence is APPTAVPAAPAAG.

This sequence belongs to the MnmG family. TrmFO subfamily. FAD serves as cofactor.

It localises to the cytoplasm. It catalyses the reaction uridine(54) in tRNA + (6R)-5,10-methylene-5,6,7,8-tetrahydrofolate + NADH + H(+) = 5-methyluridine(54) in tRNA + (6S)-5,6,7,8-tetrahydrofolate + NAD(+). It carries out the reaction uridine(54) in tRNA + (6R)-5,10-methylene-5,6,7,8-tetrahydrofolate + NADPH + H(+) = 5-methyluridine(54) in tRNA + (6S)-5,6,7,8-tetrahydrofolate + NADP(+). In terms of biological role, catalyzes the folate-dependent formation of 5-methyl-uridine at position 54 (M-5-U54) in all tRNAs. The sequence is that of Methylenetetrahydrofolate--tRNA-(uracil-5-)-methyltransferase TrmFO from Anaeromyxobacter dehalogenans (strain 2CP-1 / ATCC BAA-258).